Consider the following 282-residue polypeptide: Biotin synthase (282 aa).

Residues 1 to 228 enclose the Radical SAM core domain; that stretch reads MQEIFLCSIS…NARLMVAGGR (228 aa). 3 residues coordinate [4Fe-4S] cluster: cysteine 17, cysteine 21, and cysteine 24. 4 residues coordinate [2Fe-2S] cluster: cysteine 61, cysteine 96, cysteine 154, and arginine 221.

Belongs to the radical SAM superfamily. Biotin synthase family. Homodimer. [4Fe-4S] cluster is required as a cofactor. Requires [2Fe-2S] cluster as cofactor.

It carries out the reaction (4R,5S)-dethiobiotin + (sulfur carrier)-SH + 2 reduced [2Fe-2S]-[ferredoxin] + 2 S-adenosyl-L-methionine = (sulfur carrier)-H + biotin + 2 5'-deoxyadenosine + 2 L-methionine + 2 oxidized [2Fe-2S]-[ferredoxin]. The protein operates within cofactor biosynthesis; biotin biosynthesis; biotin from 7,8-diaminononanoate: step 2/2. In terms of biological role, catalyzes the conversion of dethiobiotin (DTB) to biotin by the insertion of a sulfur atom into dethiobiotin via a radical-based mechanism. The protein is Biotin synthase of Helicobacter pylori (strain HPAG1).